A 456-amino-acid chain; its full sequence is MVSLMFFSSASPLCSSPSKIPKASLDFEMKKLGGSTKLVRNVNLEKLKNNYLFPEINRRELEHIEKHPNVQLISLGTGDTTEPIPEQITSHMSNFAHGLSTVEGYRGYGLEQGNKTLRKAIAETFYRDLHVKSNEVFVSDGAQSDISRLQLLLGSNVTIAVQDPTFPAYIDSSVIIGQTGHFHEKTKKYQNVVYMPCGPNNSFFPDLAMTPRTDVIFFCSPNNPTGYVASRKQLHQLVDFAKTNGSIIIFDSAYAAFIEDGSPRSIYEIPGAREVAIEVSSFSKFAGFTGVRLGWSIIPDELLYSNGFPIINDFHRIVTTSFNGASNIAQAGGLACLSSGGLKEIRSVNNYYKENRKILMDTLVSLGLKVYGGVNAPYLWVHFKGSKSWDVFNEILENTHIITVPGSGFGPGGEEYLRISGFGRRDHIVEASKRLQNFFNTRTKHFTYLSSTSNTN.

A chloroplast-targeting transit peptide spans 1–43 (MVSLMFFSSASPLCSSPSKIPKASLDFEMKKLGGSTKLVRNVN). Pyridoxal 5'-phosphate contacts are provided by residues Y108, 142–143 (AQ), N223, D251, Y254, S281, S283, R292, and N323.

The protein belongs to the class-I pyridoxal-phosphate-dependent aminotransferase family. LL-diaminopimelate aminotransferase subfamily. The cofactor is pyridoxal 5'-phosphate. Highly expressed in senescing leaves, flowers, siliques and seeds.

It is found in the plastid. Its subcellular location is the chloroplast. Its function is as follows. Aminotransferase involved in local and systemic acquired resistance (SAR) to the bacterial pathogen P.syringae. Required for salicylic acid (SA) and camalexin accumulation upon pathogen infection. Possesses aminotransferase activity in vitro and may generate amino-acid-derived defense signals in vivo. May be involved in ethylene-induced senescence signaling. Involved in the biosynthesis of pipecolate (Pip), a metabolite that orchestrates defense amplification, positive regulation of SA biosynthesis, and priming to guarantee effective local resistance induction and the establishment of SAR. Converts lysine to alpha-keto-epsilon-aminocaproate, which then can spontaneously cyclize to form delta-(1)-piperideine-2-carboxylate (P2C). P2C is converted to Pip by SARD4. May produce non-Pip metabolites that play roles in immunity. Involved in the synthesis of distinct metabolite signals that affect basal and early defenses, and later defense responses. The protein is Aminotransferase ALD1, chloroplastic of Arabidopsis thaliana (Mouse-ear cress).